Consider the following 126-residue polypeptide: Nascent polypeptide-associated complex protein (126 aa).

Residues 10-77 enclose the NAC-A/B domain; sequence PRMMKQMQKM…AKKVAKEEEK (68 aa).

This sequence belongs to the NAC-alpha family. In terms of assembly, homodimer. Interacts with the ribosome. Binds ribosomal RNA.

Its function is as follows. Contacts the emerging nascent chain on the ribosome. In Methanococcus maripaludis (strain C7 / ATCC BAA-1331), this protein is Nascent polypeptide-associated complex protein.